The sequence spans 488 residues: MSYPGYPPTGYPPFPGYPPAGQESSFPPSGQYPYPSGFPPMGGGAYPQVPSSGYPGAGGYPAPGGYPAPGGYPGAPQPGGAPSYPGVPPGQGFGVPPGGAGFSGYPQPPSQSYGGGPAQVPLPGGFPGGQMPSQYPGGQPTYPSQINTDSFSSYPVFSPVSLDYSSEPATVTQVTQGTIRPAANFDAIRDAEILRKAMKGFGTDEQAIVDVVANRSNDQRQKIKAAFKTSYGKDLIKDLKSELSGNMEELILALFMPPTYYDAWSLRKAMQGAGTQERVLIEILCTRTNQEIREIVRCYQSEFGRDLEKDIRSDTSGHFERLLVSMCQGNRDENQSINHQMAQEDAQRLYQAGEGRLGTDESCFNMILATRSFPQLRATMEAYSRMANRDLLSSVSREFSGYVESGLKTILQCALNRPAFFAERLYYAMKGAGTDDSTLVRIVVTRSEIDLVQIKQMFAQMYQKTLGTMIAGDTSGDYRRLLLAIVGQ.

Positions 1–18 (MSYPGYPPTGYPPFPGYP) are enriched in pro residues. Disordered stretches follow at residues 1–49 (MSYP…YPQV) and 71–143 (GYPG…PTYP). The interval 1–143 (MSYPGYPPTG…QYPGGQPTYP (143 aa)) is repeat-rich region. Residues 5–20 (GYPPTGYPPFPGYPPA) form a 3 X 5 AA tandem repeats of G-Y-P-P-X region. Residues 89 to 102 (PGQGFGVPPGGAGF) are compositionally biased toward gly residues. Annexin repeat units lie at residues 185 to 256 (FDAI…ALFM), 257 to 328 (PPTY…SMCQ), 340 to 412 (QMAQ…TILQ), and 416 to 487 (NRPA…AIVG). K233 carries the post-translational modification N6-acetyllysine.

Belongs to the annexin family. In terms of assembly, interacts with PDCD6. In terms of tissue distribution, isoform 1 is expressed in brain, heart and skeletal muscle. Isoform 2 is more abundant in liver, lung, kidney, spleen, fibroblasts and placenta.

Its function is as follows. Calcium/phospholipid-binding protein which promotes membrane fusion and is involved in exocytosis. This Homo sapiens (Human) protein is Annexin A7 (ANXA7).